The chain runs to 50 residues: Tubulin alpha chain (50 aa).

Asn28 is a GTP binding site. The active site involves Glu40.

This sequence belongs to the tubulin family. In terms of assembly, dimer of alpha and beta chains. A typical microtubule is a hollow water-filled tube with an outer diameter of 25 nm and an inner diameter of 15 nM. Alpha-beta heterodimers associate head-to-tail to form protofilaments running lengthwise along the microtubule wall with the beta-tubulin subunit facing the microtubule plus end conferring a structural polarity. Microtubules usually have 13 protofilaments but different protofilament numbers can be found in some organisms and specialized cells. It depends on Mg(2+) as a cofactor.

The protein localises to the cytoplasm. The protein resides in the cytoskeleton. The catalysed reaction is GTP + H2O = GDP + phosphate + H(+). Functionally, tubulin is the major constituent of microtubules, a cylinder consisting of laterally associated linear protofilaments composed of alpha- and beta-tubulin heterodimers. Microtubules grow by the addition of GTP-tubulin dimers to the microtubule end, where a stabilizing cap forms. Below the cap, tubulin dimers are in GDP-bound state, owing to GTPase activity of alpha-tubulin. This Populus euphratica (Euphrates poplar) protein is Tubulin alpha chain.